An 874-amino-acid polypeptide reads, in one-letter code: MSNDRPLTHSEAESSALRLGRNPGLQVRHDEVERSLLTPMLQHYAELKDAYPHALLLYRVGDFYETFFQDACTVARELELVLTGKEGGKEVGRVAMAGIPHHALERYCRTLIEKGYAIAICDQVEDPAQAQGLVKREVTQVFTPGTVLDTELLQPRRNNFLAAVVLSGNHWGLAYADVSTGEFCTTQGSDRADLVAELNRLQPAEILLPTEAPDINRVLRPGEGKDQLPPELPPQWCYTLRSPEDFQAAAARQRLCQRFQVKSLEGFGCEHLPLALRAAGGLVAYLDETHRQQPVPLQNLSTYSLQQYLFLDPQTRRNLELTQTVRDGSFQGSLLWAIDRTATAMGGRLLRRWLLQPLLDIEEITARQDAIAELMANSSLRQSLHRHLQEIYDLERLAGRAGSGTANARDLAALRDSFRTLVSLAAVVANTSSPYLQALAQLPPVIEQLADTLSAALVDQPPTSLSEGGILRPGAYPELDQQRQQIEQDQQWILNLEAQERQRTGISTLKVGYTKVFGYYLSVSRAKLNQVPDDYIRKQTLTNEERFITAELKEREARLLAAQSHLFELEYQYFVQLREQVAAQASTIREIAAAVAAVDALLGLAEVALYQGYCRPQLTRDRQLCIRGGRHPVVEQTLPAGFFVPNDTQLGTGADLMVLTGPNASGKSCYLRQVGLIQLLAQMGSYVPATSATLGICDRIFTRVGAVDDLATGQSTFMVEMNETANILNHAGDRSLVLLDEIGRGTATFDGLAIAWSVAEYLATILKSRTIFATHYHELNQLATLLPNVANYQVVVKELPNEIIFLHQVKPGGADRSYGIEAGRLAGLPAVVIQRAREVMCQIEKHSRITVGLRKSSMGDPPTAPEINQGELPF.

The span at 1–12 (MSNDRPLTHSEA) shows a compositional bias: basic and acidic residues. The interval 1–20 (MSNDRPLTHSEAESSALRLG) is disordered. Position 661–668 (661–668 (GPNASGKS)) interacts with ATP. The tract at residues 854–874 (RKSSMGDPPTAPEINQGELPF) is disordered.

Belongs to the DNA mismatch repair MutS family.

Functionally, this protein is involved in the repair of mismatches in DNA. It is possible that it carries out the mismatch recognition step. This protein has a weak ATPase activity. This is DNA mismatch repair protein MutS from Thermosynechococcus vestitus (strain NIES-2133 / IAM M-273 / BP-1).